We begin with the raw amino-acid sequence, 539 residues long: Protein PNS1 (539 aa).

Residues 1–38 (MPLNEKYERPPQPPPAYDPNHRPPSSSENSAAANVNDG) form a disordered region. The Cytoplasmic portion of the chain corresponds to 1-81 (MPLNEKYERP…NDNKPRWNDW (81 aa)). Positions 25 to 36 (SSSENSAAANVN) are enriched in low complexity. A helical transmembrane segment spans residues 82-102 (PFTIFFLCTVGGFIAIAAITL). The Extracellular portion of the chain corresponds to 103-129 (RAWSQTYSSTGSGIYDGVNTGTLNTNA). A helical transmembrane segment spans residues 130–150 (AILLVFVCIIALVFSVLGLTL). At 151 to 157 (CRIFPKQ) the chain is on the cytoplasmic side. The chain crosses the membrane as a helical span at residues 158–178 (FIYCGMVINLVASLGTAIMYM). Residues 179–182 (SLRY) are Extracellular-facing. Residues 183–203 (WSAGIVFLVFTFMTAWCYWGM) traverse the membrane as a helical segment. Residues 204 to 226 (RSRIPLSVAVLKVVVDAMKKCPQ) are Cytoplasmic-facing. The helical transmembrane segment at 227-247 (IFFVSFVGALVASAFGFLFSA) threads the bilayer. Residues 248–274 (VIVATYIKYDPNSSNGGCDVSGGSCSH) are Extracellular-facing. N-linked (GlcNAc...) asparagine glycosylation is present at Asn259. Residues 275 to 295 (SKLIGVLVVVFFCGYYISEVI) traverse the membrane as a helical segment. The Cytoplasmic segment spans residues 296–332 (RNVIHCVISGVFGSWYYMSKSDQGMPRWPAFGALKRA). Residues 333–353 (MTYSFGSICFGSLLVALIDLL) form a helical membrane-spanning segment. Residues 354 to 371 (RQILQMIRHDVTSSGGGQ) are Extracellular-facing. Residues 372–392 (IAIQILFMVFDWIIGFLKWLA) form a helical membrane-spanning segment. At 393–436 (EYFNHYAYSFIALYGKPYLRAAKETWYMLREKGMDALINDNLIN) the chain is on the cytoplasmic side. A helical transmembrane segment spans residues 437–457 (IALGLFSMFASYMTALFTFLY). Over 458-473 (LRFTSPQYNSNGAYNG) the chain is Extracellular. A helical membrane pass occupies residues 474-494 (ALMAFSFVIALQICNIATEAI). Over 495-539 (RSGTATFFVALGNDPEVFHHSYPHRFDEIFRAYPDVLRKLSHQNV) the chain is Cytoplasmic.

The protein belongs to the CTL (choline transporter-like) family.

The protein resides in the cell membrane. Probably involved in transport through the plasma membrane. In Saccharomyces cerevisiae (strain ATCC 204508 / S288c) (Baker's yeast), this protein is Protein PNS1 (PNS1).